The primary structure comprises 819 residues: DNA topoisomerase 4 subunit A (819 aa).

The region spanning 30–496 (LPDIRDGLKP…QIIEIDTASL (467 aa)) is the Topo IIA-type catalytic domain. Catalysis depends on Y118, which acts as the O-(5'-phospho-DNA)-tyrosine intermediate.

It belongs to the type II topoisomerase GyrA/ParC subunit family. ParC type 2 subfamily. Heterotetramer composed of ParC and ParE.

Its subcellular location is the cell membrane. It catalyses the reaction ATP-dependent breakage, passage and rejoining of double-stranded DNA.. Its function is as follows. Topoisomerase IV is essential for chromosome segregation. It relaxes supercoiled DNA. Performs the decatenation events required during the replication of a circular DNA molecule. The sequence is that of DNA topoisomerase 4 subunit A from Streptococcus pyogenes serotype M3 (strain ATCC BAA-595 / MGAS315).